The sequence spans 494 residues: uncharacterized protein (494 aa).

In terms of domain architecture, 2Fe-2S ferredoxin-type spans 4–82 (FTITVKKTEG…NMIIEPLEGF (79 aa)). 4 residues coordinate [2Fe-2S] cluster: cysteine 46, cysteine 51, cysteine 54, and cysteine 66. 4Fe-4S ferredoxin-type domains lie at 127–157 (DLKD…NYPG) and 178–208 (EKEA…IVHN). Residues cysteine 137, cysteine 140, cysteine 143, cysteine 147, cysteine 189, cysteine 192, cysteine 195, and cysteine 199 each coordinate [4Fe-4S] cluster.

The protein belongs to the succinate dehydrogenase/fumarate reductase iron-sulfur protein family.

This is an uncharacterized protein from Methanococcus maripaludis (strain DSM 14266 / JCM 13030 / NBRC 101832 / S2 / LL).